Consider the following 280-residue polypeptide: Acetylglutamate kinase (280 aa).

Substrate-binding positions include 57–58 (GG), R79, and N174.

Belongs to the acetylglutamate kinase family. ArgB subfamily.

It is found in the cytoplasm. The enzyme catalyses N-acetyl-L-glutamate + ATP = N-acetyl-L-glutamyl 5-phosphate + ADP. Its pathway is amino-acid biosynthesis; L-arginine biosynthesis; N(2)-acetyl-L-ornithine from L-glutamate: step 2/4. In terms of biological role, catalyzes the ATP-dependent phosphorylation of N-acetyl-L-glutamate. The polypeptide is Acetylglutamate kinase (Helicobacter hepaticus (strain ATCC 51449 / 3B1)).